A 504-amino-acid polypeptide reads, in one-letter code: Zinc finger CCCH domain-containing protein 18 (504 aa).

Residues 40 to 69 (SNADLLEVHEELLAAIKDAEEGLLHLKRSR) adopt a coiled-coil conformation. Positions 77–105 (IFPNQEPTSEAPEVAVDPPDDVEPEPLEP) are disordered. The segment covering 94 to 104 (PPDDVEPEPLE) has biased composition (acidic residues). Residues 146–173 (SENMSMCKFFLQQRCRFGSNCRLSHGIV) form a C3H1-type zinc finger. A disordered region spans residues 230 to 276 (GSSARLPSDSLSISEYADESDEDGEGSSSDEGSDFSEDGDQEDESVH). 2 stretches are compositionally biased toward acidic residues: residues 245–254 (YADESDEDGE) and 260–272 (EGSDFSEDGDQED). The 47-residue stretch at 304-350 (TRGVASKMMAKMGYREGMGLGVSGQGMLDPIPVKVLPPKQSLDHAVA) folds into the G-patch domain. 3 disordered regions span residues 351–390 (ASEVNDSVGPGKKRSRGGKRKREKKFAEQARAAKAEEEER), 406–432 (AEGSAVKSKKDSSGEANGHAKKEDRRS), and 482–504 (EATHASATNAVARKEKEKKWLKF). Over residues 361–374 (GKKRSRGGKRKREK) the composition is skewed to basic residues. Basic and acidic residues-rich tracts occupy residues 375-390 (KFAEQARAAKAEEEER), 413-432 (SKKDSSGEANGHAKKEDRRS), and 493-504 (ARKEKEKKWLKF). The stretch at 430-500 (RRSLLAYDDE…AVARKEKEKK (71 aa)) forms a coiled coil.

This is Zinc finger CCCH domain-containing protein 18 from Oryza sativa subsp. japonica (Rice).